The following is a 244-amino-acid chain: 3-deoxy-manno-octulosonate cytidylyltransferase (244 aa).

This sequence belongs to the KdsB family.

The protein localises to the cytoplasm. The enzyme catalyses 3-deoxy-alpha-D-manno-oct-2-ulosonate + CTP = CMP-3-deoxy-beta-D-manno-octulosonate + diphosphate. The protein operates within nucleotide-sugar biosynthesis; CMP-3-deoxy-D-manno-octulosonate biosynthesis; CMP-3-deoxy-D-manno-octulosonate from 3-deoxy-D-manno-octulosonate and CTP: step 1/1. Its pathway is bacterial outer membrane biogenesis; lipopolysaccharide biosynthesis. In terms of biological role, activates KDO (a required 8-carbon sugar) for incorporation into bacterial lipopolysaccharide in Gram-negative bacteria. This chain is 3-deoxy-manno-octulosonate cytidylyltransferase, found in Ruthia magnifica subsp. Calyptogena magnifica.